Here is a 179-residue protein sequence, read N- to C-terminus: Transcriptional repressor NrdR (179 aa).

Residues 3–34 fold into a zinc finger; the sequence is CPYCQHTNSRVLESRSSEGGQSIRRRRECLCC. Positions 49–139 constitute an ATP-cone domain; sequence ITVIKHDGKK…VYGRFQGIKD (91 aa). A disordered region spans residues 160 to 179; that stretch reads KPANDDFSEQETPSTVMMPS. The segment covering 169 to 179 has biased composition (polar residues); that stretch reads QETPSTVMMPS.

Belongs to the NrdR family. Zn(2+) serves as cofactor.

Negatively regulates transcription of bacterial ribonucleotide reductase nrd genes and operons by binding to NrdR-boxes. The polypeptide is Transcriptional repressor NrdR (Rippkaea orientalis (strain PCC 8801 / RF-1) (Cyanothece sp. (strain PCC 8801))).